The primary structure comprises 59 residues: Large ribosomal subunit protein bL32 (59 aa).

The disordered stretch occupies residues 1 to 59 (MAVQQNKKSPSKRGMHRSHDALTAPALSVDSTTGEVHRPHHISPNGMYRGRKVVKAKGE). Basic residues predominate over residues 49–59 (RGRKVVKAKGE).

The protein belongs to the bacterial ribosomal protein bL32 family.

The sequence is that of Large ribosomal subunit protein bL32 (rpmF) from Neisseria meningitidis serogroup B (strain ATCC BAA-335 / MC58).